Reading from the N-terminus, the 270-residue chain is Urease accessory protein UreD (270 aa).

Belongs to the UreD family. As to quaternary structure, ureD, UreF and UreG form a complex that acts as a GTP-hydrolysis-dependent molecular chaperone, activating the urease apoprotein by helping to assemble the nickel containing metallocenter of UreC. The UreE protein probably delivers the nickel.

It is found in the cytoplasm. In terms of biological role, required for maturation of urease via the functional incorporation of the urease nickel metallocenter. This Microcystis aeruginosa (strain NIES-843 / IAM M-2473) protein is Urease accessory protein UreD.